Here is a 177-residue protein sequence, read N- to C-terminus: Anti-apoptotic protein NR13 (177 aa).

The BH1 signature appears at 75-94 (LEAEGGLNWGRLLALVVFTG). A helical membrane pass occupies residues 86–106 (LLALVVFTGTLAAALAESGCE). A BH2 motif is present at residues 126–141 (EWLEEHGGWDGFCRFF). Residues 156 to 176 (SNAIMAAAGFGIAGLAFLLVV) form a helical membrane-spanning segment.

The protein belongs to the Bcl-2 family. Interacts with BAX. In terms of tissue distribution, expressed preferentially in heart, skeletal muscle, retina, optical tectum and bursa of Fabricius.

It is found in the cell membrane. Functionally, shows anti-apoptotic properties. Counteract the pro-apoptotic activity of BAX. The protein is Anti-apoptotic protein NR13 (NR13) of Gallus gallus (Chicken).